A 480-amino-acid polypeptide reads, in one-letter code: ESX-1 secretion system ATPase EccB1 (480 aa).

A helical membrane pass occupies residues Ile44–Phe64. Residues Asp461 to Pro480 form a disordered region.

It belongs to the EccB family. As to quaternary structure, part of the ESX-1 / type VII secretion system (T7SS), which is composed of cytosolic and membrane components. The ESX-1 membrane complex is composed of EccB1, EccCa1, EccCb1, EccD1 and EccE1.

It is found in the cell inner membrane. An ATPase. Part of the ESX-1 specialized secretion system, which delivers several virulence factors to host cells during infection, including the key virulence factors EsxA (ESAT-6) and EsxB (CFP-10). This Mycobacterium tuberculosis (strain CDC 1551 / Oshkosh) protein is ESX-1 secretion system ATPase EccB1.